The sequence spans 375 residues: Putative nuclease YhcG (375 aa).

In terms of assembly, interacts with DNA processing enzymes, including the restriction complex HsdMRS, the integrases IntF and IntS, and the recombinase PinE.

In terms of biological role, may be a nuclease involved in DNA recombination and repair. This is Putative nuclease YhcG (yhcG) from Escherichia coli (strain K12).